Here is a 503-residue protein sequence, read N- to C-terminus: Lactation elevated protein 1 homolog B (503 aa).

A disordered region spans residues 108 to 155 (LQNQPTSELQDKVGSRETVNICRPDENVSNEKEDQQEESSKPHPPQGY). Residues 130–148 (RPDENVSNEKEDQQEESSK) show a composition bias toward basic and acidic residues. Residue 159-166 (GNVGTGKT) coordinates ATP.

Belongs to the AFG1 ATPase family.

The chain is Lactation elevated protein 1 homolog B (lace1b) from Danio rerio (Zebrafish).